The primary structure comprises 331 residues: Gamma-parvin (331 aa).

N-acetylmethionine is present on Met1. The segment at 18 to 38 (QPTEEELPRGGKKKYLSPNSK) is disordered. Calponin-homology (CH) domains follow at residues 44–151 (EELQ…KRFQ) and 210–317 (HAVQ…QKHS).

It belongs to the parvin family. In terms of assembly, interacts with ILK; the interaction promotes the establishment of cell polarity required for leukocyte migration. Interacts with ARHGEF6; the guanine nucleotide exchange factor activity of ARHGEF6 is essential for the PARVG-induced enhancement of cell spreading. In terms of tissue distribution, expressed strongly in spleen and testis, moderately in lung and weakly in brain and heart.

The protein resides in the cell junction. It is found in the focal adhesion. It localises to the cell membrane. The protein localises to the cytoplasm. Its subcellular location is the cytoskeleton. Plays a role with ILK in promoting the cell adhesion and spreading of leukocytes. This Mus musculus (Mouse) protein is Gamma-parvin (Parvg).